Consider the following 392-residue polypeptide: Glutamine synthetase (392 aa).

In terms of domain architecture, GS beta-grasp spans 26–106 (VQVTYVWIDG…VMCEVLKYNR (81 aa)). Residues 113 to 392 (LRHTCKKIME…MASPRDAAVF (280 aa)) enclose the GS catalytic domain. E134 contributes to the ATP binding site. 4 residues coordinate Mn(2+): E134, E136, E196, and E203. 203 to 208 (EFQVGP) provides a ligand contact to ATP. 246–247 (NW) contacts L-glutamate. H253 provides a ligand contact to Mn(2+). ATP is bound by residues 255 to 257 (NYS), R319, and R324. Position 319 (R319) interacts with L-glutamate. 336–338 (YFE) serves as a coordination point for ADP. Residue E338 participates in Mn(2+) binding. R340 provides a ligand contact to L-glutamate.

The protein belongs to the glutamine synthetase family. The cofactor is Mg(2+). Requires Mn(2+) as cofactor.

It localises to the cytoplasm. The protein resides in the cytosol. It is found in the microsome. Its subcellular location is the mitochondrion. The enzyme catalyses L-glutamate + NH4(+) + ATP = L-glutamine + ADP + phosphate + H(+). In terms of biological role, glutamine synthetase that catalyzes the ATP-dependent conversion of glutamate and ammonia to glutamine. The chain is Glutamine synthetase from Xenopus laevis (African clawed frog).